Reading from the N-terminus, the 863-residue chain is Alanine--tRNA ligase (863 aa).

Residues H552, H556, C654, and H658 each contribute to the Zn(2+) site.

This sequence belongs to the class-II aminoacyl-tRNA synthetase family. It depends on Zn(2+) as a cofactor.

It is found in the cytoplasm. The enzyme catalyses tRNA(Ala) + L-alanine + ATP = L-alanyl-tRNA(Ala) + AMP + diphosphate. Functionally, catalyzes the attachment of alanine to tRNA(Ala) in a two-step reaction: alanine is first activated by ATP to form Ala-AMP and then transferred to the acceptor end of tRNA(Ala). Also edits incorrectly charged Ser-tRNA(Ala) and Gly-tRNA(Ala) via its editing domain. The polypeptide is Alanine--tRNA ligase (Nitrosomonas eutropha (strain DSM 101675 / C91 / Nm57)).